Reading from the N-terminus, the 331-residue chain is Adenosine deaminase (331 aa).

2 residues coordinate Zn(2+): histidine 12 and histidine 14. Positions 14, 16, and 170 each coordinate substrate. Residue histidine 197 coordinates Zn(2+). The active-site Proton donor is the glutamate 200. A Zn(2+)-binding site is contributed by aspartate 278. Aspartate 279 provides a ligand contact to substrate.

The protein belongs to the metallo-dependent hydrolases superfamily. Adenosine and AMP deaminases family. Adenosine deaminase subfamily. Zn(2+) is required as a cofactor.

It catalyses the reaction adenosine + H2O + H(+) = inosine + NH4(+). The catalysed reaction is 2'-deoxyadenosine + H2O + H(+) = 2'-deoxyinosine + NH4(+). In terms of biological role, catalyzes the hydrolytic deamination of adenosine and 2-deoxyadenosine. This Shewanella baltica (strain OS223) protein is Adenosine deaminase.